We begin with the raw amino-acid sequence, 933 residues long: Thyroid peroxidase (933 aa).

A signal peptide spans 1–18; that stretch reads MRALAVLSVTLVMACTEA. The Extracellular portion of the chain corresponds to 19 to 846; sequence FFPFISRGKE…TCVDSGRLPR (828 aa). An N-linked (GlcNAc...) asparagine glycan is attached at asparagine 129. Cysteine 142 and cysteine 158 form a disulfide bridge. Residue aspartate 238 participates in heme b binding. The active-site Proton acceptor is histidine 239. Aspartate 240 provides a ligand contact to Ca(2+). Disulfide bonds link cysteine 259-cysteine 269 and cysteine 263-cysteine 286. Asparagine 307 carries an N-linked (GlcNAc...) asparagine glycan. Ca(2+)-binding residues include threonine 321, phenylalanine 323, aspartate 325, and serine 327. The N-linked (GlcNAc...) asparagine glycan is linked to asparagine 342. Heme b is bound by residues glutamate 399 and histidine 494. A glycan (N-linked (GlcNAc...) asparagine) is linked at asparagine 569. 2 cysteine pairs are disulfide-bonded: cysteine 598/cysteine 655 and cysteine 696/cysteine 721. One can recognise a Sushi domain in the interval 740–795; the sequence is DKCGFPESVENGDFVHCEESGRRVLVYSCRHGYELQGREQLTCTQEGWDFQPPLCK. Residues 796–839 form the EGF-like; calcium-binding domain; the sequence is DVNECADGAHPPCHASARCRNTKGGFQCLCADPYELGDDGRTCV. Cystine bridges form between cysteine 800–cysteine 814, cysteine 808–cysteine 823, and cysteine 825–cysteine 838. The helical transmembrane segment at 847-871 threads the bilayer; the sequence is VTWISMSLAALLIGGFAGLTSTVIC. Over 872 to 933 the chain is Cytoplasmic; it reads RWTRTGTKST…RDTHRLPRAL (62 aa). Positions 881-933 are disordered; the sequence is TLPISETGGGTPELRCGKHQAVGTSPQRAAAQDSEQESAGMEGRDTHRLPRAL. A compositionally biased stretch (basic and acidic residues) spans 922–933; the sequence is EGRDTHRLPRAL.

The protein belongs to the peroxidase family. XPO subfamily. In terms of assembly, interacts with DUOX1, DUOX2 and CYBA. Ca(2+) is required as a cofactor. Heme b serves as cofactor. Post-translationally, glycosylated. Heme is covalently bound through a H(2)O(2)-dependent autocatalytic process. Heme insertion is important for the delivery of protein at the cell surface. In terms of processing, cleaved in its N-terminal part.

The protein localises to the membrane. Its subcellular location is the cell surface. It catalyses the reaction 2 iodide + H2O2 + 2 H(+) = diiodine + 2 H2O. The catalysed reaction is [thyroglobulin]-L-tyrosine + iodide + H2O2 + H(+) = [thyroglobulin]-3-iodo-L-tyrosine + 2 H2O. It carries out the reaction [thyroglobulin]-3-iodo-L-tyrosine + iodide + H2O2 + H(+) = [thyroglobulin]-3,5-diiodo-L-tyrosine + 2 H2O. The enzyme catalyses 2 [thyroglobulin]-3,5-diiodo-L-tyrosine + H2O2 = [thyroglobulin]-L-thyroxine + [thyroglobulin]-dehydroalanine + 2 H2O. It catalyses the reaction [thyroglobulin]-3-iodo-L-tyrosine + [thyroglobulin]-3,5-diiodo-L-tyrosine + H2O2 = [thyroglobulin]-3,3',5-triiodo-L-thyronine + [thyroglobulin]-dehydroalanine + 2 H2O. The protein operates within hormone biosynthesis; thyroid hormone biosynthesis. Iodination and coupling of the hormonogenic tyrosines in thyroglobulin to yield the thyroid hormones T(3) and T(4). This is Thyroid peroxidase from Homo sapiens (Human).